The chain runs to 133 residues: Holo-[acyl-carrier-protein] synthase (133 aa).

2 residues coordinate Mg(2+): Asp8 and Glu57.

Belongs to the P-Pant transferase superfamily. AcpS family. Mg(2+) is required as a cofactor.

The protein localises to the cytoplasm. The catalysed reaction is apo-[ACP] + CoA = holo-[ACP] + adenosine 3',5'-bisphosphate + H(+). Its function is as follows. Transfers the 4'-phosphopantetheine moiety from coenzyme A to a Ser of acyl-carrier-protein. The sequence is that of Holo-[acyl-carrier-protein] synthase from Bartonella tribocorum (strain CIP 105476 / IBS 506).